The primary structure comprises 163 residues: Cyanate hydratase (163 aa).

Active-site residues include Arg103, Glu106, and Ser129.

Belongs to the cyanase family.

It catalyses the reaction cyanate + hydrogencarbonate + 3 H(+) = NH4(+) + 2 CO2. In terms of biological role, catalyzes the reaction of cyanate with bicarbonate to produce ammonia and carbon dioxide. In Ajellomyces capsulatus (strain H143) (Darling's disease fungus), this protein is Cyanate hydratase.